We begin with the raw amino-acid sequence, 139 residues long: D-ribose pyranase (139 aa).

H20 acts as the Proton donor in catalysis. Substrate contacts are provided by residues D28, H106, and 128–130; that span reads YAN.

Belongs to the RbsD / FucU family. RbsD subfamily. Homodecamer.

Its subcellular location is the cytoplasm. It carries out the reaction beta-D-ribopyranose = beta-D-ribofuranose. It functions in the pathway carbohydrate metabolism; D-ribose degradation; D-ribose 5-phosphate from beta-D-ribopyranose: step 1/2. Its function is as follows. Catalyzes the interconversion of beta-pyran and beta-furan forms of D-ribose. The polypeptide is D-ribose pyranase (Aeromonas salmonicida (strain A449)).